Here is a 220-residue protein sequence, read N- to C-terminus: Probable septum site-determining protein MinC (220 aa).

The protein belongs to the MinC family. As to quaternary structure, interacts with MinD and FtsZ.

Functionally, cell division inhibitor that blocks the formation of polar Z ring septums. Rapidly oscillates between the poles of the cell to destabilize FtsZ filaments that have formed before they mature into polar Z rings. Prevents FtsZ polymerization. The protein is Probable septum site-determining protein MinC of Photobacterium profundum (strain SS9).